The following is a 771-amino-acid chain: Probable exo-1,4-beta-xylosidase xlnD (771 aa).

Residues 1-25 (MARIMSWHYGKAITLFVCLGPVALS) form the signal peptide. Asparagine 67 is a glycosylation site (N-linked (GlcNAc...) asparagine). The active site involves aspartate 293. Residues asparagine 305, asparagine 345, asparagine 423, and asparagine 464 are each glycosylated (N-linked (GlcNAc...) asparagine).

It belongs to the glycosyl hydrolase 3 family.

It is found in the secreted. It catalyses the reaction Hydrolysis of (1-&gt;4)-beta-D-xylans, to remove successive D-xylose residues from the non-reducing termini.. It functions in the pathway glycan degradation; xylan degradation. In terms of biological role, xylan 1,4-beta-xylosidase involved in the hydrolysis of xylan, a major structural heterogeneous polysaccharide found in plant biomass representing the second most abundant polysaccharide in the biosphere, after cellulose. In Neosartorya fischeri (strain ATCC 1020 / DSM 3700 / CBS 544.65 / FGSC A1164 / JCM 1740 / NRRL 181 / WB 181) (Aspergillus fischerianus), this protein is Probable exo-1,4-beta-xylosidase xlnD (xlnD).